A 217-amino-acid chain; its full sequence is MTLVLNQTEQLTSGLKAMGVKLAEVQQAKILRYLELLHKWNKAYNLTAVRDPVLHVSRHILDSLAALPYLKGVQFLDVGAGAGLPGIPLSIALPESHWTLLDSNGKKTRFMDQCRMDMGLPNLRVEHTRIEAFSPDVKFDGIISRAFATIGDMIAGCRDLILSETRIYALKGLYPHDEIEAMPADFEVVEWHKLEVPGCDGERHLLIIARSGNTGGS.

S-adenosyl-L-methionine is bound by residues Gly79, Leu84, 130–131 (IE), and Arg145.

It belongs to the methyltransferase superfamily. RNA methyltransferase RsmG family.

The protein resides in the cytoplasm. The catalysed reaction is guanosine(527) in 16S rRNA + S-adenosyl-L-methionine = N(7)-methylguanosine(527) in 16S rRNA + S-adenosyl-L-homocysteine. Functionally, specifically methylates the N7 position of guanine in position 527 of 16S rRNA. This is Ribosomal RNA small subunit methyltransferase G from Hahella chejuensis (strain KCTC 2396).